The chain runs to 718 residues: Scarecrow-like protein 9 (718 aa).

The segment at 305-338 (VEKKKASDAQGGKRRARGRGRGRGRGGGGGQNGK) is disordered. Residues 316–328 (GKRRARGRGRGRG) show a composition bias toward basic residues. Positions 335–713 (QNGKKEVVDL…RTVMALSVWK (379 aa)) constitute a GRAS domain. The leucine repeat I (LRI) stretch occupies residues 342–402 (VDLRSLLIHC…EARLAGTGSQ (61 aa)). The VHIID stretch occupies residues 421 to 484 (HQLFLACCPF…YGSPKVRITG (64 aa)). Positions 452–456 (VHVID) match the VHIID motif. A leucine repeat II (LRII) region spans residues 500 to 532 (ETGQRLAAYAKLFGVPFEYKAIAKKWDAIQLED). The segment at 541-635 (TVVNCLYRAE…MEVFGREALN (95 aa)) is PFYRE. The SAW stretch occupies residues 638 to 713 (ACEGWERVER…RTVMALSVWK (76 aa)).

The protein belongs to the GRAS family. As to expression, expressed in cotyledons, leaves and flowers, and in the elongation zone in root.

Its subcellular location is the nucleus. Its function is as follows. Probable transcription factor involved in plant development. In Arabidopsis thaliana (Mouse-ear cress), this protein is Scarecrow-like protein 9 (SCL9).